The primary structure comprises 202 residues: Outer-membrane lipoprotein carrier protein (202 aa).

The first 18 residues, 1-18, serve as a signal peptide directing secretion; the sequence is MNKLFLILLLIFSHEVFS.

It belongs to the LolA family. In terms of assembly, monomer.

The protein localises to the periplasm. Its function is as follows. Participates in the translocation of lipoproteins from the inner membrane to the outer membrane. Only forms a complex with a lipoprotein if the residue after the N-terminal Cys is not an aspartate (The Asp acts as a targeting signal to indicate that the lipoprotein should stay in the inner membrane). The chain is Outer-membrane lipoprotein carrier protein from Legionella pneumophila (strain Corby).